Reading from the N-terminus, the 505-residue chain is NADH-quinone oxidoreductase subunit N (505 aa).

The next 14 membrane-spanning stretches (helical) occupy residues 20–40 (ALAP…GDLF), 59–79 (ALAL…GGVF), 83–103 (GLAA…ALMS), 115–135 (GEYY…VSAG), 137–157 (AIVL…LVAL), 172–192 (FLMG…LYGL), 220–240 (AVVA…TVPF), 251–271 (APTT…FAVL), 285–305 (LWSD…NIAA), 314–334 (MLAY…AACT), 342–362 (AAYL…IIYL), 394–414 (LAAV…TAGF), 431–451 (ITVV…LGVA), and 481–501 (AVCL…LFWI).

The protein belongs to the complex I subunit 2 family. In terms of assembly, NDH-1 is composed of 14 different subunits. Subunits NuoA, H, J, K, L, M, N constitute the membrane sector of the complex.

Its subcellular location is the cell inner membrane. It catalyses the reaction a quinone + NADH + 5 H(+)(in) = a quinol + NAD(+) + 4 H(+)(out). In terms of biological role, NDH-1 shuttles electrons from NADH, via FMN and iron-sulfur (Fe-S) centers, to quinones in the respiratory chain. The immediate electron acceptor for the enzyme in this species is believed to be ubiquinone. Couples the redox reaction to proton translocation (for every two electrons transferred, four hydrogen ions are translocated across the cytoplasmic membrane), and thus conserves the redox energy in a proton gradient. The chain is NADH-quinone oxidoreductase subunit N from Desulfovibrio desulfuricans (strain ATCC 27774 / DSM 6949 / MB).